The sequence spans 300 residues: B3 domain-containing protein At5g57720 (300 aa).

The TF-B3 DNA-binding region spans 11-105 (PDFLKIFNSH…SFWVRIHRNG (95 aa)). A disordered region spans residues 115-142 (KIQEISDDEDETNGDGDPHMEEEGDTDE). Residues 119–129 (ISDDEDETNGD) are compositionally biased toward acidic residues.

Its subcellular location is the nucleus. The polypeptide is B3 domain-containing protein At5g57720 (Arabidopsis thaliana (Mouse-ear cress)).